A 584-amino-acid chain; its full sequence is Chaperonin GroEL 1 (584 aa).

ATP contacts are provided by residues 29 to 32 (TIGP), 86 to 90 (DGTTT), G413, and D492. A disordered region spans residues 523–542 (EPEAAAPGGPGGDPMGGMGG). Over residues 530-542 (GGPGGDPMGGMGG) the composition is skewed to gly residues.

It belongs to the chaperonin (HSP60) family. In terms of assembly, forms a cylinder of 14 subunits composed of two heptameric rings stacked back-to-back. Interacts with the co-chaperonin GroES.

The protein resides in the cytoplasm. It carries out the reaction ATP + H2O + a folded polypeptide = ADP + phosphate + an unfolded polypeptide.. Together with its co-chaperonin GroES, plays an essential role in assisting protein folding. The GroEL-GroES system forms a nano-cage that allows encapsulation of the non-native substrate proteins and provides a physical environment optimized to promote and accelerate protein folding. The sequence is that of Chaperonin GroEL 1 from Prochlorococcus marinus (strain MIT 9312).